The chain runs to 502 residues: Xyloglucan-specific endo-beta-1,4-glucanase BoGH5A (502 aa).

The first 32 residues, 1-32 (MEKQSFSDGLFSPLGIKRVIFMLVLLTTSFIS), serve as a signal peptide directing secretion. Cys33 carries the N-palmitoyl cysteine lipid modification. Cys33 carries the S-diacylglycerol cysteine lipid modification. The region spanning 67 to 127 (GPAEWHISTS…PDIIINVKQS (61 aa)) is the BACON domain. Residues Asn165, Val172, His251, and Asn296 each coordinate substrate. The active-site Proton donor is Glu297. Residue Glu430 is the Nucleophile of the active site. Substrate is bound at residue Trp472.

Belongs to the glycosyl hydrolase 5 (cellulase A) family.

It localises to the cell outer membrane. The catalysed reaction is xyloglucan + H2O = xyloglucan oligosaccharides.. It functions in the pathway glucan metabolism; xyloglucan degradation. Catalyzes endohydrolysis of 1,4-beta-D-glucosidic linkages in xyloglucan with retention of the beta-configuration of the glycosyl residues in xyloglucan degradation. Cleaves the backbone of the 3 major types of natural xyloglucans (seed galactoxyloglucan from tamarind kernel, dicot fucogalactoxyloglucan from lettuce leaves, and solanaceous arabinogalactoxyloglucan from tomato fruit), to produce xyloglucan oligosaccharides. The polypeptide is Xyloglucan-specific endo-beta-1,4-glucanase BoGH5A (Bacteroides ovatus (strain ATCC 8483 / DSM 1896 / JCM 5824 / BCRC 10623 / CCUG 4943 / NCTC 11153)).